The following is a 134-amino-acid chain: Arsenate reductase (134 aa).

Catalysis depends on nucleophile residues C11, C83, and C90. Intrachain disulfides connect C11–C83 and C83–C90.

Belongs to the low molecular weight phosphotyrosine protein phosphatase family. Thioredoxin-coupled ArsC subfamily.

Its subcellular location is the cytoplasm. The enzyme catalyses arsenate + [thioredoxin]-dithiol + H(+) = arsenite + [thioredoxin]-disulfide + H2O. Functionally, catalyzes the reduction of arsenate [As(V)] to arsenite [As(III)]. The polypeptide is Arsenate reductase (Bacillus cereus (strain Q1)).